A 1125-amino-acid chain; its full sequence is Kinase and exchange factor for Rac B (1125 aa).

Disordered stretches follow at residues 50–175, 247–287, and 322–362; these read VTGG…ASIN, SVPG…GGKF, and KTRD…VNSD. The span at 59 to 91 shows a compositional bias: low complexity; that stretch reads NNQQQQQNNNNNNNNNNNNNNNNNNNNNNNNNN. The span at 92-106 shows a compositional bias: polar residues; sequence SGEISSNNSTPSILF. A compositionally biased stretch (pro residues) spans 113–124; it reads TAPPAPPQPTTP. The span at 137-161 shows a compositional bias: low complexity; the sequence is NINQQPIGGVNNNNNNNNKDSPSNK. Residues 380-571 form the DH domain; the sequence is KRRQVSLQIL…KSTVDYVKEK (192 aa). Residues 601 to 822 enclose the PH domain; it reads RYVREGMLTE…WIQAIHANII (222 aa). Disordered regions lie at residues 693–729 and 761–791; these read INNM…SNNN and SNNN…YSNG. A compositionally biased stretch (low complexity) spans 694–729; sequence NNMTNNDSKSKNNNNNNSNGNNNNNNINSNSNSNNN. The Protein kinase domain maps to 848–1117; the sequence is IKLCEQIGSG…QLVQKLTKML (270 aa). ATP contacts are provided by residues 854–862 and K876; that span reads IGSGGSGCT. D971 functions as the Proton acceptor in the catalytic mechanism.

It belongs to the protein kinase superfamily. STE Ser/Thr protein kinase family. The cofactor is Mg(2+).

It carries out the reaction L-seryl-[protein] + ATP = O-phospho-L-seryl-[protein] + ADP + H(+). The enzyme catalyses L-threonyl-[protein] + ATP = O-phospho-L-threonyl-[protein] + ADP + H(+). In Dictyostelium discoideum (Social amoeba), this protein is Kinase and exchange factor for Rac B.